Reading from the N-terminus, the 173-residue chain is Crossover junction endodeoxyribonuclease RuvC (173 aa).

Residues Asp8, Glu67, and Asp139 contribute to the active site. Mg(2+) is bound by residues Asp8, Glu67, and Asp139.

Belongs to the RuvC family. As to quaternary structure, homodimer which binds Holliday junction (HJ) DNA. The HJ becomes 2-fold symmetrical on binding to RuvC with unstacked arms; it has a different conformation from HJ DNA in complex with RuvA. In the full resolvosome a probable DNA-RuvA(4)-RuvB(12)-RuvC(2) complex forms which resolves the HJ. Mg(2+) is required as a cofactor.

It is found in the cytoplasm. It carries out the reaction Endonucleolytic cleavage at a junction such as a reciprocal single-stranded crossover between two homologous DNA duplexes (Holliday junction).. Its function is as follows. The RuvA-RuvB-RuvC complex processes Holliday junction (HJ) DNA during genetic recombination and DNA repair. Endonuclease that resolves HJ intermediates. Cleaves cruciform DNA by making single-stranded nicks across the HJ at symmetrical positions within the homologous arms, yielding a 5'-phosphate and a 3'-hydroxyl group; requires a central core of homology in the junction. The consensus cleavage sequence is 5'-(A/T)TT(C/G)-3'. Cleavage occurs on the 3'-side of the TT dinucleotide at the point of strand exchange. HJ branch migration catalyzed by RuvA-RuvB allows RuvC to scan DNA until it finds its consensus sequence, where it cleaves and resolves the cruciform DNA. In Shewanella baltica (strain OS223), this protein is Crossover junction endodeoxyribonuclease RuvC.